The following is a 416-amino-acid chain: Lipase A (416 aa).

An N-terminal signal peptide occupies residues 1–32 (MRLAPQKPLLLSTVLHLLLSIWMLGFASLAGA). 2 cysteine pairs are disulfide-bonded: C67–C391 and C177–C180. The N-linked (GlcNAc...) asparagine glycan is linked to N179. The Nucleophile role is filled by S219. Active-site charge relay system residues include D287 and H381.

Belongs to the AB hydrolase superfamily. Lipase family. Glycosylated.

Its subcellular location is the secreted. The enzyme catalyses Deacetylation of xylans and xylo-oligosaccharides.. It carries out the reaction a triacylglycerol + H2O = a diacylglycerol + a fatty acid + H(+). In terms of biological role, lipolytic enzyme that possesses both lipase and acetylxylan esterase activity. Active towards p-nitrophenol esters of various carbon chain length with preference for medium-chain fatty acids (C-8). Also highly active on the acetylated compounds xylose tetra-acetate and oat spelt xylan. This is Lipase A from Sodiomyces alcalophilus (Acremonium alcalophilum).